Reading from the N-terminus, the 175-residue chain is Protein TWIN SISTER of FT (175 aa).

This sequence belongs to the phosphatidylethanolamine-binding protein family.

It localises to the cytoplasm. Its function is as follows. May form complexes with phosphorylated ligands by interfering with kinases and their effectors. The sequence is that of Protein TWIN SISTER of FT (TSF) from Arabidopsis thaliana (Mouse-ear cress).